The sequence spans 1177 residues: Topoisomerase 1-associated factor 1 (1177 aa).

4 disordered regions span residues Ala-575 to Leu-597, Arg-791 to Ser-815, Leu-874 to Glu-1001, and Leu-1021 to Glu-1177. Positions Ile-583–Leu-597 are enriched in acidic residues. Over residues Arg-791–Gly-803 the composition is skewed to basic and acidic residues. Composition is skewed to acidic residues over residues Phe-911–Val-921 and Glu-954–Leu-963. Over residues Ile-981–Asp-991 the composition is skewed to basic and acidic residues. Residues Ser-1086–Gly-1096 are compositionally biased toward polar residues. Acidic residues-rich tracts occupy residues Glu-1108–Leu-1118 and Thr-1146–Ala-1155.

It belongs to the timeless family. As to quaternary structure, component of the fork protection complex (FPC) consisting of tof1 and csm3.

It is found in the nucleus. Forms a fork protection complex (FPC) with csm3 and which is required for chromosome segregation during meiosis and DNA damage repair. FPC coordinates leading and lagging strand synthesis and moves with the replication fork. FPC stabilizes replication forks in a configuration that is recognized by replication checkpoint sensors. The polypeptide is Topoisomerase 1-associated factor 1 (tof1) (Neosartorya fischeri (strain ATCC 1020 / DSM 3700 / CBS 544.65 / FGSC A1164 / JCM 1740 / NRRL 181 / WB 181) (Aspergillus fischerianus)).